A 568-amino-acid chain; its full sequence is Involucrin (568 aa).

Disordered stretches follow at residues 23–499 and 517–568; these read CSPA…EKEL and RKKH…HEVQ. Low complexity predominate over residues 25-36; that stretch reads PAQTQQEQTKQP. The span at 49 to 77 shows a compositional bias: basic and acidic residues; that stretch reads TQEKGFPKHEEKEANPVKDLPEQESEHHQ. The segment covering 78-88 has biased composition (low complexity); it reads QPGPQKQQLQV. The segment covering 89–106 has biased composition (basic and acidic residues); the sequence is KKPEQELQEQELHSEKQP. Low complexity-rich tracts occupy residues 107–121, 133–154, and 172–181; these read QEPQGLLCLGQQQQR, HQQPQQESQGQGLCLGQQQDVL, and PELPLGQQQK. Residues 193–213 show a composition bias toward basic and acidic residues; it reads KQQKLHLVERHQEPQEQELHH. A compositionally biased stretch (low complexity) spans 217-232; it reads QKQQQPQEQELQLVQH. 2 stretches are compositionally biased toward basic and acidic residues: residues 266 to 333 and 345 to 456; these read ESHE…HQET and KPHE…HLGK. A compositionally biased stretch (low complexity) spans 457–467; it reads QQEQQIEYEGY. Ser-472 is subject to Phosphoserine. Basic and acidic residues-rich tracts occupy residues 478-499, 517-532, and 551-568; these read KQEKASRGQELDDSHLEQEKEL, RKKHKLENLTQKEKQI, and VKEDSLTTKKQQHSHEVQ.

Belongs to the involucrin family. In terms of assembly, directly or indirectly cross-linked to cornifelin (CNFN). Substrate of transglutaminase. Specific glutamines or lysines are cross-linked to keratins, desmoplakin and to inter involucrin molecules. In terms of tissue distribution, keratinocytes of epidermis and other stratified squamous epithelia.

The protein localises to the cytoplasm. Functionally, part of the insoluble cornified cell envelope (CE) of stratified squamous epithelia. This chain is Involucrin (Ivl), found in Rattus norvegicus (Rat).